A 632-amino-acid polypeptide reads, in one-letter code: tRNA uridine 5-carboxymethylaminomethyl modification enzyme MnmG (632 aa).

Residue 13-18 (GGGHAG) participates in FAD binding. 273–287 (GPRYCPSIEDKIHRF) provides a ligand contact to NAD(+).

The protein belongs to the MnmG family. As to quaternary structure, homodimer. Heterotetramer of two MnmE and two MnmG subunits. FAD serves as cofactor.

Its subcellular location is the cytoplasm. Functionally, NAD-binding protein involved in the addition of a carboxymethylaminomethyl (cmnm) group at the wobble position (U34) of certain tRNAs, forming tRNA-cmnm(5)s(2)U34. The chain is tRNA uridine 5-carboxymethylaminomethyl modification enzyme MnmG from Psychrobacter arcticus (strain DSM 17307 / VKM B-2377 / 273-4).